We begin with the raw amino-acid sequence, 200 residues long: Putative peroxiredoxin sll0755 (200 aa).

In terms of domain architecture, Thioredoxin spans 5 to 163 (LRVGQPAPDF…TLRVLKAIRH (159 aa)). C50 functions as the Cysteine sulfenic acid (-SOH) intermediate in the catalytic mechanism.

Belongs to the peroxiredoxin family. AhpC/Prx1 subfamily. In terms of assembly, homodimer; disulfide-linked, upon oxidation.

It is found in the cytoplasm. The catalysed reaction is a hydroperoxide + [thioredoxin]-dithiol = an alcohol + [thioredoxin]-disulfide + H2O. Thiol-specific peroxidase that catalyzes the reduction of hydrogen peroxide and organic hydroperoxides to water and alcohols, respectively. Plays a role in cell protection against oxidative stress by detoxifying peroxides. The polypeptide is Putative peroxiredoxin sll0755 (Synechocystis sp. (strain ATCC 27184 / PCC 6803 / Kazusa)).